A 1843-amino-acid chain; its full sequence is Nonribosomal peptide synthetase SIDD (1843 aa).

Residues 1–83 (MLSIDDHGGG…QQQQQQQQRS (83 aa)) are disordered. Over residues 65–81 (QQQQQQQQQQQQQQQQQ) the composition is skewed to low complexity. The segment at 133–528 (TYSELEHLST…TEVEHHIQTC (396 aa)) is adenylation 1. The tract at residues 628 to 647 (KLGATHADEGPQEEPETDAE) is disordered. The Carrier 1 domain occupies 641–716 (EPETDAEKKL…AMANKSTSIS (76 aa)). The residue at position 677 (Ser677) is an O-(pantetheine 4'-phosphoryl)serine. Residues 753–1175 (VEDVYPCTPL…ALSDDDAAAL (423 aa)) are condensation 1. A Carrier 2 domain is found at 1289–1365 (SATSQRQRRL…EMAAVMECTD (77 aa)). An O-(pantetheine 4'-phosphoryl)serine modification is found at Ser1326. The condensation 2 stretch occupies residues 1447–1734 (FFDGPVDLRR…LREIAENCGL (288 aa)).

It belongs to the NRP synthetase family. Pantetheine 4'-phosphate is required as a cofactor.

It participates in siderophore biosynthesis. In terms of biological role, nonribosomal peptide synthetase; part of the gene cluster that mediates the biosynthesis of at least 11 siderophores, including beauverichelin A, dimerumic acid (DA), Na-dimethyl coprogen (NADC), eleutherazine B, ferricrocin (FC), fusarinine A, fusarinine C (FsC), metachelin A, mevalonolactone, rhodotorulic acid (RA) and tenellin. This cocktail of siderophores for iron metabolism is essential for virulence, and more specifically for the fungal virulence in penetrating through the host cuticle. Siderophore synthesis is also involved in conidial germination under iron-deficient conditions. SIDC catalyzes the assembly of ferricrocin whereas SIDD catalyzes the assembly of fusarinine C. The protein is Nonribosomal peptide synthetase SIDD of Beauveria bassiana (strain ARSEF 2860) (White muscardine disease fungus).